The chain runs to 90 residues: DNA-binding protein HU-beta (90 aa).

It belongs to the bacterial histone-like protein family. As to quaternary structure, heterodimer of an alpha and a beta chain.

Histone-like DNA-binding protein which is capable of wrapping DNA to stabilize it, and thus to prevent its denaturation under extreme environmental conditions. This Escherichia coli O6:H1 (strain CFT073 / ATCC 700928 / UPEC) protein is DNA-binding protein HU-beta (hupB).